The following is a 469-amino-acid chain: 3-isopropylmalate dehydratase large subunit (469 aa).

Residues cysteine 347, cysteine 410, and cysteine 413 each contribute to the [4Fe-4S] cluster site.

Belongs to the aconitase/IPM isomerase family. LeuC type 1 subfamily. In terms of assembly, heterodimer of LeuC and LeuD. It depends on [4Fe-4S] cluster as a cofactor.

The enzyme catalyses (2R,3S)-3-isopropylmalate = (2S)-2-isopropylmalate. It functions in the pathway amino-acid biosynthesis; L-leucine biosynthesis; L-leucine from 3-methyl-2-oxobutanoate: step 2/4. Its function is as follows. Catalyzes the isomerization between 2-isopropylmalate and 3-isopropylmalate, via the formation of 2-isopropylmaleate. This chain is 3-isopropylmalate dehydratase large subunit, found in Ralstonia nicotianae (strain ATCC BAA-1114 / GMI1000) (Ralstonia solanacearum).